The chain runs to 71 residues: Small ribosomal subunit protein bS18 (71 aa).

The protein belongs to the bacterial ribosomal protein bS18 family. In terms of assembly, part of the 30S ribosomal subunit. Forms a tight heterodimer with protein bS6.

Its function is as follows. Binds as a heterodimer with protein bS6 to the central domain of the 16S rRNA, where it helps stabilize the platform of the 30S subunit. This is Small ribosomal subunit protein bS18 from Microcystis aeruginosa (strain NIES-843 / IAM M-2473).